The sequence spans 465 residues: Protein hedgehog (465 aa).

Cys79 carries N-palmitoyl cysteine lipidation. 7 residues coordinate Ca(2+): Glu143, Glu144, Asp149, Thr179, Glu180, Asp183, and Asp185. Gly251 carries the Cholesterol glycine ester lipid modification.

This sequence belongs to the hedgehog family. Interacts with shf. In terms of processing, the C-terminal part of the hedgehog protein precursor displays an autoproteolysis activity that results in the cleavage of the full-length protein into two parts (N-product and C-product). In addition, the C-terminal part displays a cholesterol transferase activity that results by the covalent attachment of a cholesterol moiety to the C-terminal of the newly generated N-product. The N-product is the active species in both local and long-range signaling, whereas the C-product has no signaling activity. Cholesterylation is required for N-product targeting to lipid rafts and multimerization. Post-translationally, N-palmitoylation by Rasp of the hedgehog N-product, within the secretory pathway, is required for the embryonic and larval patterning activities of the hedgehog signal.

The protein localises to the nucleus. The protein resides in the cytoplasm. It is found in the cell membrane. The catalysed reaction is glycyl-L-cysteinyl-[protein] + cholesterol + H(+) = [protein]-C-terminal glycyl cholesterol ester + N-terminal L-cysteinyl-[protein]. Functionally, the C-terminal part of the hedgehog protein precursor displays an autoproteolysis activity that results in the cleavage of the full-length protein into two parts (N-product and C-product). In addition, the C-terminal part displays a cholesterol transferase activity that results by the covalent attachment of a cholesterol moiety to the C-terminal of the newly generated N-product. Once cleaved, the C-product has no signaling activity and diffuses from the cell. Its function is as follows. The dually lipidated hedgehog protein N-product is a morphogen which is essential for a variety of patterning events during development. Establishes the anterior-posterior axis of the embryonic segments and patterns the larval imaginal disks. Binds to the patched (ptc) receptor, which functions in association with smoothened (smo), to activate the transcription of target genes wingless (wg), decapentaplegic (dpp) and ptc. In the absence of hh, ptc represses the constitutive signaling activity of smo through fused (fu). Essential component of a signaling pathway which regulates the Duox-dependent gut immune response to bacterial uracil; required to activate Cad99C-dependent endosome formation, norpA-dependent Ca2+ mobilization and p38 MAPK, which are essential steps in the Duox-dependent production of reactive oxygen species (ROS) in response to intestinal bacterial infection. During photoreceptor differentiation, it up-regulates transcription of Ubr3, which in turn promotes the hh-signaling pathway by mediating the ubiquitination and degradation of cos. The protein is Protein hedgehog of Drosophila sechellia (Fruit fly).